The primary structure comprises 321 residues: Putative glucan endo-1,3-beta-glucosidase GVI (321 aa).

The signal sequence occupies residues 1 to 6; sequence LAGVEG. The active-site Proton donor is the Glu100. Catalysis depends on Glu241, which acts as the Nucleophile.

The protein belongs to the glycosyl hydrolase 17 family.

The enzyme catalyses Hydrolysis of (1-&gt;3)-beta-D-glucosidic linkages in (1-&gt;3)-beta-D-glucans.. May provide a degree of protection against microbial invasion of germinated barley grain through its ability to degrade fungal cell wall polysaccharides. This is Putative glucan endo-1,3-beta-glucosidase GVI from Hordeum vulgare (Barley).